The sequence spans 55 residues: Large ribosomal subunit protein bL33 (55 aa).

Belongs to the bacterial ribosomal protein bL33 family.

The protein is Large ribosomal subunit protein bL33 of Bifidobacterium longum (strain DJO10A).